Here is a 184-residue protein sequence, read N- to C-terminus: Ribosome-recycling factor (184 aa).

It belongs to the RRF family.

The protein localises to the cytoplasm. In terms of biological role, responsible for the release of ribosomes from messenger RNA at the termination of protein biosynthesis. May increase the efficiency of translation by recycling ribosomes from one round of translation to another. The sequence is that of Ribosome-recycling factor from Borrelia turicatae (strain 91E135).